The primary structure comprises 370 residues: Actin-related protein 2/3 complex subunit 1A (370 aa).

6 WD repeats span residues 6–45 (FLLEPITCHAWNRDRTQIALSPNNHEVHIYKKNGGQWVKA), 50–89 (EHNGHITGIDWAPKSDRIVTCGADRNAYVWSQKDGVWKPT), 140–179 (PIRSTVLSLDWHPNNVLLAAGSCDFKCRVFSAYIKEVDEK), 202–241 (GTGGWVHGVSFSASGSRLAWVSHDSTVSVADASKSVQVST), 244–284 (TEFL…TFVS), and 322–365 (LHQN…SSIQ).

This sequence belongs to the WD repeat ARPC1 family. Probable component of the Arp2/3 complex in which it may replace ARPC1B.

The protein resides in the cytoplasm. It localises to the cytoskeleton. It is found in the nucleus. Probably functions as a component of the Arp2/3 complex which is involved in regulation of actin polymerization and together with an activating nucleation-promoting factor (NPF) mediates the formation of branched actin networks. In addition to its role in the cytoplasmic cytoskeleton, the Arp2/3 complex also promotes actin polymerization in the nucleus, thereby regulating gene transcription and repair of damaged DNA. The polypeptide is Actin-related protein 2/3 complex subunit 1A (ARPC1A) (Bos taurus (Bovine)).